The sequence spans 326 residues: MATH domain and coiled-coil domain-containing protein At3g58370 (326 aa).

Positions 7–133 (DNKFTWVIKN…NGEVKIVVEI (127 aa)) constitute an MATH domain. Residues 259–312 (LRLDWLEKKLAEVKAKKKKVETGKARLQRAEEELQKLNQKCLELKAFLEKENAD) are a coiled coil.

This chain is MATH domain and coiled-coil domain-containing protein At3g58370, found in Arabidopsis thaliana (Mouse-ear cress).